The sequence spans 188 residues: MNWHMIISGLIVVVLKVVGMTLFLLYFPQIFNKSNDGFTTTRSYGTVSQIFGSSSPSPNGFITTRSYGTVCPKDWEFYQARCFFLSTSESSWNESRDFCKGKGSTLAIVNTPEKLKFLQDITDAEKYFIGLIYHREEKRWRWINNSVFNGNVTNQNQNFNCATIGLTKTFDAASCDISYRRICEKNAK.

At 1–4 the chain is on the cytoplasmic side; sequence MNWH. Residues 5-27 form a helical; Signal-anchor for type II membrane protein membrane-spanning segment; sequence MIISGLIVVVLKVVGMTLFLLYF. Residues 28–188 are Extracellular-facing; it reads PQIFNKSNDG…YRRICEKNAK (161 aa). An N-linked (GlcNAc...) asparagine glycan is attached at Asn32. A disulfide bridge links Cys71 with Cys82. The C-type lectin domain maps to 78–184; it reads YQARCFFLST…CDISYRRICE (107 aa). 3 N-linked (GlcNAc...) asparagine glycosylation sites follow: Asn93, Asn144, and Asn151. Cystine bridges form between Cys99/Cys183 and Cys161/Cys175.

In terms of assembly, monomer. Homodimer. The majority of CLEC5A is expressed as a monomeric form on macrophages. Interacts with TYROBP/DAP12. The interaction with TYROBP is required for CLEC5A cell surface expression. Interacts with HCST/DAP10. Forms a CLEC5A/TYROBP/HCST trimolecular complex depending almost solely on TYROBP. (Microbial infection) Interacts with dengue virus envelope protein E. N-glycosylated. Contains sialic acid residues. Highly expressed in bone marrow with lower levels in synovium, lung and bronchus. Expressed in peripheral blood monocytes and in the monocyte/macrophage cell lines U-937 and Mono-Mac-6, but not in cell lines of other origins. Expression is down-regulated when monocytes differentiate into dendritic cells.

The protein resides in the cell membrane. Its function is as follows. Functions as a positive regulator of osteoclastogenesis. Cell surface receptor that signals via TYROBP. Regulates inflammatory responses. In terms of biological role, (Microbial infection) Critical macrophage receptor for dengue virus serotypes 1-4. The binding of dengue virus to CLEC5A triggers signaling through the phosphorylation of TYROBP. This interaction does not result in viral entry, but stimulates pro-inflammatory cytokine release. The protein is C-type lectin domain family 5 member A (CLEC5A) of Homo sapiens (Human).